The chain runs to 339 residues: Glycerol-3-phosphate dehydrogenase [NAD(P)+] (339 aa).

Residues Ser-15, Tyr-16, His-36, and Lys-110 each coordinate NADPH. Residues Lys-110, Gly-139, and Thr-141 each contribute to the sn-glycerol 3-phosphate site. An NADPH-binding site is contributed by Ala-143. Residues Lys-195, Asp-248, Ser-258, Arg-259, and Asn-260 each coordinate sn-glycerol 3-phosphate. Lys-195 serves as the catalytic Proton acceptor. Arg-259 serves as a coordination point for NADPH. NADPH-binding residues include Val-283 and Glu-285.

The protein belongs to the NAD-dependent glycerol-3-phosphate dehydrogenase family.

Its subcellular location is the cytoplasm. The enzyme catalyses sn-glycerol 3-phosphate + NAD(+) = dihydroxyacetone phosphate + NADH + H(+). It catalyses the reaction sn-glycerol 3-phosphate + NADP(+) = dihydroxyacetone phosphate + NADPH + H(+). The protein operates within membrane lipid metabolism; glycerophospholipid metabolism. Functionally, catalyzes the reduction of the glycolytic intermediate dihydroxyacetone phosphate (DHAP) to sn-glycerol 3-phosphate (G3P), the key precursor for phospholipid synthesis. This is Glycerol-3-phosphate dehydrogenase [NAD(P)+] from Pectobacterium carotovorum subsp. carotovorum (strain PC1).